The chain runs to 181 residues: MTATLQRESVGTGRVVWFTGLSGAGKSTLASALYEELIARGEQVELLDGDAVRENLSKGLGFTKADRDTNVRRIAFVAGLLAKHGVTVLVSAISPYAETRREVLANLPNPTEVFVDAPLAVVTERDVKGLYLKALAGEIPHFTGVSDPYEAPENPDLHLRTDRISVQDGLKQLLDHLGVNA.

An ATP-binding site is contributed by 20–27; that stretch reads GLSGAGKS. Residue Ser-94 is the Phosphoserine intermediate of the active site.

This sequence belongs to the APS kinase family.

It catalyses the reaction adenosine 5'-phosphosulfate + ATP = 3'-phosphoadenylyl sulfate + ADP + H(+). It functions in the pathway sulfur metabolism; hydrogen sulfide biosynthesis; sulfite from sulfate: step 2/3. Its function is as follows. Catalyzes the synthesis of activated sulfate. The sequence is that of Adenylyl-sulfate kinase from Deinococcus deserti (strain DSM 17065 / CIP 109153 / LMG 22923 / VCD115).